The following is a 92-amino-acid chain: Larval cuticle protein 9 (92 aa).

Positions 1 to 16 (MKFVIVLACLLAVVFA) are cleaved as a signal peptide. Residues 31-92 (LLDFNYAYEL…TGYHPKVVEA (62 aa)) form the Chitin-binding type R&amp;R domain.

In terms of biological role, component of the cuticle of the larva. The protein is Larval cuticle protein 9 (Lcp9) of Drosophila melanogaster (Fruit fly).